A 181-amino-acid chain; its full sequence is UPF0200 protein Ta0179 (181 aa).

Residue 6-13 (GMPGAGKD) participates in ATP binding.

It belongs to the UPF0200 family.

The chain is UPF0200 protein Ta0179 from Thermoplasma acidophilum (strain ATCC 25905 / DSM 1728 / JCM 9062 / NBRC 15155 / AMRC-C165).